Here is a 249-residue protein sequence, read N- to C-terminus: MIISILTLFPEMFAGPFGSSIIKRARERGLVDIELFDIRDFSPNRHRTVDDTPYGGGGGMVMRPEPIRRALDHLLERGRGGGTVVLLCPQGRRFDQDSARALAAAGKLVLICGHYEGVDERVREDVDLEISVGDFVVTGGEIPAMLVVDAVCRLVPGVLGEPGGAEDDSFAGGLLEYPQYTRPRDYLGRDVPEVLLSGHHGEIERWRRQEALLRTLVRRPDLIDAARMEAGDRELLAQLARRLKELGLV.

Residues Gly-113 and 132-137 contribute to the S-adenosyl-L-methionine site; that span reads VGDFVV.

It belongs to the RNA methyltransferase TrmD family. In terms of assembly, homodimer.

Its subcellular location is the cytoplasm. The enzyme catalyses guanosine(37) in tRNA + S-adenosyl-L-methionine = N(1)-methylguanosine(37) in tRNA + S-adenosyl-L-homocysteine + H(+). Functionally, specifically methylates guanosine-37 in various tRNAs. The chain is tRNA (guanine-N(1)-)-methyltransferase from Desulforudis audaxviator (strain MP104C).